A 184-amino-acid polypeptide reads, in one-letter code: Protein DP71L (184 aa).

Residues 1 to 15 are compositionally biased toward basic residues; that stretch reads MSRRNKRSRRRRKKP. Residues 1–41 are disordered; the sequence is MSRRNKRSRRRRKKPLNTIQPGPSKPSAQDEPIKSVSHHSS. Important for host CHOP inhibition regions lie at residues 125–127 and 169–173; these read VYF and LSAVL.

Belongs to the asfivirus DP71L family. As to quaternary structure, interacts (via C-terminus) with host PPP1CB.

In terms of biological role, interacts with the host phosphatase PP1 catalytic subunit (PPP1CB) and recruits it to dephosphorylate EIF2S1/eIF2alpha and therefore restores the host translation that has been shut-down by the host. Also inhibits the EIF2S1/eIF2alpha-ATF4-DDIT3/CHOP pathway. The polypeptide is Protein DP71L (Ornithodoros (relapsing fever ticks)).